The sequence spans 248 residues: 1-(5-phosphoribosyl)-5-[(5-phosphoribosylamino)methylideneamino] imidazole-4-carboxamide isomerase (248 aa).

Aspartate 17 (proton acceptor) is an active-site residue. Aspartate 136 serves as the catalytic Proton donor.

Belongs to the HisA/HisF family.

It is found in the cytoplasm. It catalyses the reaction 1-(5-phospho-beta-D-ribosyl)-5-[(5-phospho-beta-D-ribosylamino)methylideneamino]imidazole-4-carboxamide = 5-[(5-phospho-1-deoxy-D-ribulos-1-ylimino)methylamino]-1-(5-phospho-beta-D-ribosyl)imidazole-4-carboxamide. It functions in the pathway amino-acid biosynthesis; L-histidine biosynthesis; L-histidine from 5-phospho-alpha-D-ribose 1-diphosphate: step 4/9. The protein is 1-(5-phosphoribosyl)-5-[(5-phosphoribosylamino)methylideneamino] imidazole-4-carboxamide isomerase of Arthrobacter sp. (strain FB24).